Here is a 432-residue protein sequence, read N- to C-terminus: Trigger factor (432 aa).

A PPIase FKBP-type domain is found at 163–248 (GDIAVIDFEG…LKALNKKELP (86 aa)).

Belongs to the FKBP-type PPIase family. Tig subfamily.

The protein localises to the cytoplasm. The enzyme catalyses [protein]-peptidylproline (omega=180) = [protein]-peptidylproline (omega=0). Functionally, involved in protein export. Acts as a chaperone by maintaining the newly synthesized protein in an open conformation. Functions as a peptidyl-prolyl cis-trans isomerase. In Caldanaerobacter subterraneus subsp. tengcongensis (strain DSM 15242 / JCM 11007 / NBRC 100824 / MB4) (Thermoanaerobacter tengcongensis), this protein is Trigger factor.